The following is a 546-amino-acid chain: Chaperonin GroEL 5 (546 aa).

ATP is bound by residues 30–33 (TLGP), lysine 51, 87–91 (DGTTT), glycine 415, and aspartate 495.

Belongs to the chaperonin (HSP60) family. In terms of assembly, forms a cylinder of 14 subunits composed of two heptameric rings stacked back-to-back. Interacts with the co-chaperonin GroES.

It localises to the cytoplasm. It catalyses the reaction ATP + H2O + a folded polypeptide = ADP + phosphate + an unfolded polypeptide.. Functionally, together with its co-chaperonin GroES, plays an essential role in assisting protein folding. The GroEL-GroES system forms a nano-cage that allows encapsulation of the non-native substrate proteins and provides a physical environment optimized to promote and accelerate protein folding. The polypeptide is Chaperonin GroEL 5 (Paraburkholderia xenovorans (strain LB400)).